A 153-amino-acid chain; its full sequence is Arachidonate 5-lipoxygenase-activating protein (153 aa).

Residues 1–8 (MDQETVGN) lie on the Lumenal side of the membrane. A helical transmembrane segment spans residues 9–30 (VVLLAIVTLISVVQNGFFAHKV). Residues 31–52 (EHESRTQNGRSFQRTGTLAFER) are Cytoplasmic-facing. A helical transmembrane segment spans residues 53-77 (VYTANQNCVDAYPTFLAVLWSAGLL). At 78–80 (CSQ) the chain is on the lumenal side. Residues 81-102 (VPAAFAGLMYLLVRQKYFVGYL) traverse the membrane as a helical segment. Residues 103 to 107 (GERTQ) lie on the Cytoplasmic side of the membrane. An intramembrane segment occupies 108–115 (STPGYIFG). The helical transmembrane segment at 116 to 128 (KRIILFLFLMSVA) threads the bilayer. At 129–153 (GIFNYYLIFFFGSDFENYIKTVTTT) the chain is on the lumenal side.

It belongs to the MAPEG family. Homotrimer. Interacts with LTC4S and ALOX5.

The protein resides in the nucleus membrane. The protein localises to the endoplasmic reticulum membrane. In terms of biological role, required for leukotriene biosynthesis by ALOX5 (5-lipoxygenase). Anchors ALOX5 to the membrane. Binds arachidonic acid, and could play an essential role in the transfer of arachidonic acid to ALOX5. Binds to MK-886, a compound that blocks the biosynthesis of leukotrienes. The sequence is that of Arachidonate 5-lipoxygenase-activating protein (ALOX5AP) from Macaca mulatta (Rhesus macaque).